The following is a 496-amino-acid chain: Neuronal acetylcholine receptor subunit beta-4 (496 aa).

Residues 1-19 (MRSALPLVLFSLVALCGRG) form the signal peptide. Residues 20–236 (DCRVANAEEK…IIKRKPLFYT (217 aa)) are Extracellular-facing. Asn-36, Asn-93, Asn-138, and Asn-166 each carry an N-linked (GlcNAc...) asparagine glycan. An intrachain disulfide couples Cys-153 to Cys-167. The chain crosses the membrane as a helical span at residues 237-257 (INLIIPCVLITSLAILVFYLP). Residues 258-265 (SDCGEKMT) are Cytoplasmic-facing. Position 262 (Glu-262) interacts with Na(+). A helical transmembrane segment spans residues 266–286 (LCISVLLALTVFLLLISKIVP). Topologically, residues 287-298 (PTSLNVPLIGKY) are extracellular. The helical transmembrane segment at 299–319 (LMFTMVLVTFSIVTSVCVLNV) threads the bilayer. At 320–464 (HHRSPSTHTM…WKYVAMVVDR (145 aa)) the chain is on the cytoplasmic side. Residues 465 to 485 (LFLWVFVVVCVLGTVGLFLPP) traverse the membrane as a helical segment. At 486-496 (LFQTHTPSEEP) the chain is on the extracellular side.

It belongs to the ligand-gated ion channel (TC 1.A.9) family. Acetylcholine receptor (TC 1.A.9.1) subfamily. Beta-4/CHRNB4 sub-subfamily. In terms of assembly, neuronal AChR is composed of two different types of subunits: alpha and beta. CHRNB4/Beta-4 subunit can be combined to CHRNA2/alpha-2, CHRNA3/alpha-3 or CHRNA4/alpha-4, CHRNA5/alpha-5 and CHRNB3/beta-3 to give rise to functional receptors. Forms stoichiometries such as (CHRNA3)2:(CHRNB4)3 or (CHRNA3:CHRNB4)2:CHRNB3. Interacts with RIC3; which is required for proper folding and assembly. Interacts with LYPD6.

It localises to the synaptic cell membrane. The protein resides in the cell membrane. It carries out the reaction Ca(2+)(in) = Ca(2+)(out). The catalysed reaction is K(+)(in) = K(+)(out). The enzyme catalyses Na(+)(in) = Na(+)(out). In terms of biological role, component of neuronal acetylcholine receptors (nAChRs) that function as pentameric, ligand-gated cation channels with high calcium permeability among other activities. nAChRs are excitatory neurotrasnmitter receptors formed by a collection of nAChR subunits known to mediate synaptic transmission in the nervous system and the neuromuscular junction. Each nAchR subunit confers differential attributes to channel properties, including activation, deactivation and desensitization kinetics, pH sensitivity, cation permeability, and binding to allosteric modulators. CHRNB4 forms heteropentameric neuronal acetylcholine receptors with CHRNA2, CHRNA3 and CHRNA4, as well as CHRNA5 and CHRNB3 as accesory subunits. CHRNA3:CHRNB4 being predominant in neurons of the autonomic ganglia, it is known as ganglionic nicotinic receptor. CHRNA3:CHRNB4 or CHRNA3:CHRNA5:CHRNB4 play also an important role in the habenulo-interpeduncular tract, modulating the mesolimbic dopamine system and affecting reward circuits and addiction. Hypothalamic CHRNA3:CHRNB4 nAChR activation by nicotine leads to activation of POMC neurons and a decrease in food intake. This is Neuronal acetylcholine receptor subunit beta-4 (CHRNB4) from Bos taurus (Bovine).